The sequence spans 262 residues: Indole-3-glycerol phosphate synthase (262 aa).

This sequence belongs to the TrpC family.

The catalysed reaction is 1-(2-carboxyphenylamino)-1-deoxy-D-ribulose 5-phosphate + H(+) = (1S,2R)-1-C-(indol-3-yl)glycerol 3-phosphate + CO2 + H2O. It participates in amino-acid biosynthesis; L-tryptophan biosynthesis; L-tryptophan from chorismate: step 4/5. This is Indole-3-glycerol phosphate synthase from Clostridium acetobutylicum (strain ATCC 824 / DSM 792 / JCM 1419 / IAM 19013 / LMG 5710 / NBRC 13948 / NRRL B-527 / VKM B-1787 / 2291 / W).